A 235-amino-acid chain; its full sequence is Orotidine 5'-phosphate decarboxylase (235 aa).

Substrate contacts are provided by residues D10, K33, 60 to 69 (DLKMHDIPNT), T123, R185, Q194, G214, and R215. Residue K62 is the Proton donor of the active site.

This sequence belongs to the OMP decarboxylase family. Type 1 subfamily. In terms of assembly, homodimer.

It catalyses the reaction orotidine 5'-phosphate + H(+) = UMP + CO2. It participates in pyrimidine metabolism; UMP biosynthesis via de novo pathway; UMP from orotate: step 2/2. Its function is as follows. Catalyzes the decarboxylation of orotidine 5'-monophosphate (OMP) to uridine 5'-monophosphate (UMP). This Lactobacillus acidophilus (strain ATCC 700396 / NCK56 / N2 / NCFM) protein is Orotidine 5'-phosphate decarboxylase.